Consider the following 503-residue polypeptide: Protein FAM124A (503 aa).

Residues 434-470 (LAQSDTVPGRQNHSSDSLHSVSDISSSPCPVFPSTPA) form a disordered region. The segment covering 436 to 445 (QSDTVPGRQN) has biased composition (polar residues). Residues 447-460 (SSDSLHSVSDISSS) show a composition bias toward low complexity.

The protein belongs to the FAM124 family.

This is Protein FAM124A (fam124a) from Xenopus tropicalis (Western clawed frog).